We begin with the raw amino-acid sequence, 78 residues long: Acyl carrier protein (78 aa).

The Carrier domain occupies 2–77; it reads SDIAERVKKI…DAVKFIEKAQ (76 aa). O-(pantetheine 4'-phosphoryl)serine is present on Ser-37.

The protein belongs to the acyl carrier protein (ACP) family. In terms of processing, 4'-phosphopantetheine is transferred from CoA to a specific serine of apo-ACP by AcpS. This modification is essential for activity because fatty acids are bound in thioester linkage to the sulfhydryl of the prosthetic group.

The protein resides in the cytoplasm. Its pathway is lipid metabolism; fatty acid biosynthesis. Carrier of the growing fatty acid chain in fatty acid biosynthesis. In Sinorhizobium fredii (strain NBRC 101917 / NGR234), this protein is Acyl carrier protein.